A 724-amino-acid polypeptide reads, in one-letter code: Phosphoribosylformylglycinamidine synthase subunit PurL (724 aa).

The active site involves His46. ATP-binding residues include Tyr49 and Lys88. Glu90 is a Mg(2+) binding site. Residues Ser91–His94 and Arg113 each bind substrate. His92 serves as the catalytic Proton acceptor. Asp114 contributes to the Mg(2+) binding site. Substrate is bound at residue Gln237. Asp265 provides a ligand contact to Mg(2+). Glu309 to Gln311 provides a ligand contact to substrate. Residues Asp489 and Gly526 each contribute to the ATP site. Residue Asn527 coordinates Mg(2+). Ser529 contacts substrate.

Belongs to the FGAMS family. In terms of assembly, monomer. Part of the FGAM synthase complex composed of 1 PurL, 1 PurQ and 2 PurS subunits.

The protein localises to the cytoplasm. It catalyses the reaction N(2)-formyl-N(1)-(5-phospho-beta-D-ribosyl)glycinamide + L-glutamine + ATP + H2O = 2-formamido-N(1)-(5-O-phospho-beta-D-ribosyl)acetamidine + L-glutamate + ADP + phosphate + H(+). Its pathway is purine metabolism; IMP biosynthesis via de novo pathway; 5-amino-1-(5-phospho-D-ribosyl)imidazole from N(2)-formyl-N(1)-(5-phospho-D-ribosyl)glycinamide: step 1/2. Part of the phosphoribosylformylglycinamidine synthase complex involved in the purines biosynthetic pathway. Catalyzes the ATP-dependent conversion of formylglycinamide ribonucleotide (FGAR) and glutamine to yield formylglycinamidine ribonucleotide (FGAM) and glutamate. The FGAM synthase complex is composed of three subunits. PurQ produces an ammonia molecule by converting glutamine to glutamate. PurL transfers the ammonia molecule to FGAR to form FGAM in an ATP-dependent manner. PurS interacts with PurQ and PurL and is thought to assist in the transfer of the ammonia molecule from PurQ to PurL. This is Phosphoribosylformylglycinamidine synthase subunit PurL from Granulibacter bethesdensis (strain ATCC BAA-1260 / CGDNIH1).